A 146-amino-acid chain; its full sequence is Large ribosomal subunit protein uL14 (146 aa).

The protein belongs to the universal ribosomal protein uL14 family.

This Encephalitozoon cuniculi (strain GB-M1) (Microsporidian parasite) protein is Large ribosomal subunit protein uL14 (RPL23).